Reading from the N-terminus, the 244-residue chain is MMRTPGLLGLRGFVAFAAKLWSFVLYLLRRQFRTIIQYQTVRYDVLPLSPASRNRLSQVKRKVLVLDLDETLIHSHHDGVLRPTVRPGTPPDFILKVVIDKHPVRFFVHKRPHVDFFLEVVSQWYELVVFTASMEIYGSAVADKLDNNKGVLRRRFYRQHCTLELGSYIKDLSVVHSDLSSVVILDNSPGAYRSHPDNAIPIKSWFSDPSDTALLNLLPMLDALRFTADVRSVLSRNLHQHRLW.

The chain crosses the membrane as a helical span at residues 7-29 (LLGLRGFVAFAAKLWSFVLYLLR). One can recognise an FCP1 homology domain in the interval 58-225 (QVKRKVLVLD…NLLPMLDALR (168 aa)).

The protein belongs to the dullard family. As to quaternary structure, interacts with bmpr1a, bmpr1b and bmpr2.

The protein localises to the membrane. The protein resides in the cytoplasm. Its subcellular location is the perinuclear region. The catalysed reaction is O-phospho-L-seryl-[protein] + H2O = L-seryl-[protein] + phosphate. The enzyme catalyses O-phospho-L-threonyl-[protein] + H2O = L-threonyl-[protein] + phosphate. Functionally, serine/threonine protein phosphatase that may dephosphorylate and activate lipins. Lipins are phosphatidate phosphatases that catalyze the conversion of phosphatidic acid to diacylglycerol and control the metabolism of fatty acids at different levels. May indirectly modulate the lipid composition of nuclear and/or endoplasmic reticulum membranes and be required for proper nuclear membrane morphology and/or dynamics. May also indirectly regulate the production of lipid droplets and triacylglycerol. Induces neuronal differentiation by antagonizing BMP signaling. Acts both by dephosphorylating BMPR1A and by promoting BMPR2 proteasomal degradation. This is CTD nuclear envelope phosphatase 1 (ctdnep1) from Xenopus laevis (African clawed frog).